A 515-amino-acid polypeptide reads, in one-letter code: Bifunctional purine biosynthesis protein PurH (515 aa).

The MGS-like domain maps to 1–145 (MTKRVLISVS…KNHASVTVVV (145 aa)).

The protein belongs to the PurH family.

The catalysed reaction is (6R)-10-formyltetrahydrofolate + 5-amino-1-(5-phospho-beta-D-ribosyl)imidazole-4-carboxamide = 5-formamido-1-(5-phospho-D-ribosyl)imidazole-4-carboxamide + (6S)-5,6,7,8-tetrahydrofolate. The enzyme catalyses IMP + H2O = 5-formamido-1-(5-phospho-D-ribosyl)imidazole-4-carboxamide. It functions in the pathway purine metabolism; IMP biosynthesis via de novo pathway; 5-formamido-1-(5-phospho-D-ribosyl)imidazole-4-carboxamide from 5-amino-1-(5-phospho-D-ribosyl)imidazole-4-carboxamide (10-formyl THF route): step 1/1. It participates in purine metabolism; IMP biosynthesis via de novo pathway; IMP from 5-formamido-1-(5-phospho-D-ribosyl)imidazole-4-carboxamide: step 1/1. In Streptococcus pneumoniae (strain P1031), this protein is Bifunctional purine biosynthesis protein PurH.